Consider the following 435-residue polypeptide: Protein CHLOROPLAST IMPORT APPARATUS 2 (435 aa).

Residues 1-59 (MSACLSSGGGGAAAYSFELEKVKSPPPSSSTTTTRATSPSSTISESSNSPLAISTRKPR) constitute a chloroplast transit peptide. 2 disordered regions span residues 21 to 66 (KVKS…KRPN) and 412 to 435 (ADQR…SGQR). The segment covering 29 to 49 (SSTTTTRATSPSSTISESSNS) has biased composition (low complexity). Positions 56 to 65 (RKPRTQRKRP) are enriched in basic residues. Residues 383–425 (REASVLRYKEKRRTRLFSKKIRYQVRKLNADQRPRMKGRFVRR) form the CCT domain.

As to expression, expressed in leaves and young flower buds.

Its subcellular location is the plastid. The protein resides in the chloroplast. The protein localises to the nucleus. In terms of biological role, responsible for specific up-regulation of the translocon genes TOC33 and TOC75 in leaves. Involved in the general chloroplast protein import pathway regulation, including protein import and protein translation efficiencies. In Arabidopsis thaliana (Mouse-ear cress), this protein is Protein CHLOROPLAST IMPORT APPARATUS 2 (CIA2).